A 231-amino-acid polypeptide reads, in one-letter code: Potassium/proton antiporter CemA (231 aa).

4 helical membrane passes run 7 to 27 (FISLLYLASIVFLPWWISLSF), 116 to 136 (IISFVILSVFSILSNEELIFL), 156 to 176 (ILLLTDLCIGFHSPHGWELMI), and 191 to 211 (IISGVVSTFPVILDTIFKYWI).

Belongs to the CemA family.

Its subcellular location is the plastid. The protein resides in the chloroplast inner membrane. It catalyses the reaction K(+)(in) + H(+)(out) = K(+)(out) + H(+)(in). Contributes to K(+)/H(+) antiport activity by supporting proton efflux to control proton extrusion and homeostasis in chloroplasts in a light-dependent manner to modulate photosynthesis. Prevents excessive induction of non-photochemical quenching (NPQ) under continuous-light conditions. Indirectly promotes efficient inorganic carbon uptake into chloroplasts. The protein is Potassium/proton antiporter CemA of Morus indica (Mulberry).